A 127-amino-acid polypeptide reads, in one-letter code: Large ribosomal subunit protein bL20 (127 aa).

The protein belongs to the bacterial ribosomal protein bL20 family.

In terms of biological role, binds directly to 23S ribosomal RNA and is necessary for the in vitro assembly process of the 50S ribosomal subunit. It is not involved in the protein synthesizing functions of that subunit. This chain is Large ribosomal subunit protein bL20, found in Opitutus terrae (strain DSM 11246 / JCM 15787 / PB90-1).